Consider the following 393-residue polypeptide: Riboflavin biosynthesis protein RibBA (393 aa).

The segment at 1 to 200 (MQFDNIDSAL…IDDLIEYRKK (200 aa)) is DHBP synthase. D-ribulose 5-phosphate is bound by residues 27–28 (RE), D32, 139–143 (RNGHT), and E163. Mg(2+) is bound at residue E28. H142 lines the Mg(2+) pocket. A GTP cyclohydrolase II region spans residues 201-393 (LEPEIEFKAK…TKKIKMGHLI (193 aa)). 249-253 (RLHSA) is a binding site for GTP. Zn(2+)-binding residues include C254, C265, and C267. GTP is bound by residues Q270, 291 to 293 (EGR), and T313. The Proton acceptor; for GTP cyclohydrolase activity role is filled by D325. The active-site Nucleophile; for GTP cyclohydrolase activity is the R327. S348 and K353 together coordinate GTP.

This sequence in the N-terminal section; belongs to the DHBP synthase family. It in the C-terminal section; belongs to the GTP cyclohydrolase II family. Mg(2+) serves as cofactor. Requires Mn(2+) as cofactor. The cofactor is Zn(2+).

The enzyme catalyses D-ribulose 5-phosphate = (2S)-2-hydroxy-3-oxobutyl phosphate + formate + H(+). It catalyses the reaction GTP + 4 H2O = 2,5-diamino-6-hydroxy-4-(5-phosphoribosylamino)-pyrimidine + formate + 2 phosphate + 3 H(+). It participates in cofactor biosynthesis; riboflavin biosynthesis; 2-hydroxy-3-oxobutyl phosphate from D-ribulose 5-phosphate: step 1/1. Its pathway is cofactor biosynthesis; riboflavin biosynthesis; 5-amino-6-(D-ribitylamino)uracil from GTP: step 1/4. Its function is as follows. Catalyzes the conversion of D-ribulose 5-phosphate to formate and 3,4-dihydroxy-2-butanone 4-phosphate. Functionally, catalyzes the conversion of GTP to 2,5-diamino-6-ribosylamino-4(3H)-pyrimidinone 5'-phosphate (DARP), formate and pyrophosphate. The sequence is that of Riboflavin biosynthesis protein RibBA from Staphylococcus aureus (strain COL).